The following is a 388-amino-acid chain: (S)-8-oxocitronellyl enol synthase ISY1 (388 aa).

NADP(+) contacts are provided by residues 35–37, 63–64, 81–82, 105–106, and Q143; these read TGI, RR, DV, and TW. Catalysis depends on residues K147 and Y178. NADP(+) is bound by residues Y178, I205, and 212–214; that span reads SMM.

Belongs to the short-chain dehydrogenases/reductases (SDR) family.

It catalyses the reaction (S)-8-oxocitronellyl enol + NADP(+) = (6E)-8-oxogeranial + NADPH + H(+). The catalysed reaction is (S)-8-oxocitronellyl enol + NAD(+) = (6E)-8-oxogeranial + NADH + H(+). Functionally, iridoid synthase that catalyzes the first step in generation of the iridoid ring scaffold using the linear monoterpene (6E)-8-oxogeranial as substrate. Iridoids comprise a large family of distinctive bicyclic monoterpenes that possess a wide range of pharmacological activities, including anticancer, anti-inflammatory, antifungal and antibacterial activities. Catalyzes the conversion of the linear monoterpene (6E)-8-oxogeranial to (S)-8-oxocitronellyl enol, a precursor of nepetalactones, which are metabolites that are both insect-repellent and have euphoric effect in cats. This Nepeta cataria (Catnip) protein is (S)-8-oxocitronellyl enol synthase ISY1.